The sequence spans 412 residues: CinA-like protein (412 aa).

It belongs to the CinA family.

The chain is CinA-like protein from Salinibacter ruber (strain DSM 13855 / M31).